The sequence spans 169 residues: Histone H1.9 (169 aa).

Composition is skewed to polar residues over residues 1-10 and 19-36; these read MSLVSPSPDS and DAST…IGPN. Positions 1–36 are disordered; that stretch reads MSLVSPSPDSNAVMAGDQDASTSQVPSQSESKIGPN. Positions 43 to 116 constitute an H15 domain; that stretch reads RKPTMSKVIL…GASGSFRLGK (74 aa). Residues Ser62 and Ser65 each carry the phosphoserine modification. Positions 118-142 are enriched in basic residues; it reads QAFKSKCKAKRRQRRQKPGQRRTGS. A disordered region spans residues 118–154; it reads QAFKSKCKAKRRQRRQKPGQRRTGSRRSLLGSKKSNN.

The protein belongs to the histone H1/H5 family.

It localises to the nucleus. The protein resides in the chromosome. Functionally, DNA-binding protein that may be implicated in chromatin remodeling and/or transcriptional regulation during spermiogenesis, the process of spermatid maturation into spermatozoa. The protein is Histone H1.9 of Rattus norvegicus (Rat).